A 206-amino-acid chain; its full sequence is dITP/XTP pyrophosphatase (206 aa).

Substrate is bound at residue 7 to 12 (SNNAKK). Aspartate 72 (proton acceptor) is an active-site residue. Aspartate 72 is a Mg(2+) binding site. Residues serine 73, 155–158 (FGYD), lysine 182, and 187–188 (HR) each bind substrate.

The protein belongs to the HAM1 NTPase family. In terms of assembly, homodimer. Mg(2+) is required as a cofactor.

It carries out the reaction XTP + H2O = XMP + diphosphate + H(+). The catalysed reaction is dITP + H2O = dIMP + diphosphate + H(+). It catalyses the reaction ITP + H2O = IMP + diphosphate + H(+). In terms of biological role, pyrophosphatase that catalyzes the hydrolysis of nucleoside triphosphates to their monophosphate derivatives, with a high preference for the non-canonical purine nucleotides XTP (xanthosine triphosphate), dITP (deoxyinosine triphosphate) and ITP. Seems to function as a house-cleaning enzyme that removes non-canonical purine nucleotides from the nucleotide pool, thus preventing their incorporation into DNA/RNA and avoiding chromosomal lesions. The protein is dITP/XTP pyrophosphatase of Corynebacterium glutamicum (strain R).